Reading from the N-terminus, the 124-residue chain is Protein S100-A16 (124 aa).

The EF-hand 1; degenerate domain maps to 23–37; that stretch reads VSKHSLVKNKISKSS. One can recognise an EF-hand 2 domain in the interval 54–89; that stretch reads GNRKAADKLIQNLDANHDGRICFDEYWTMIGGITSP. Residues aspartate 67, asparagine 69, aspartate 71, arginine 73, and glutamate 78 each coordinate Ca(2+). The disordered stretch occupies residues 97 to 124; sequence QECQQESQQECQQESQQESQQESQQGSS.

The protein belongs to the S-100 family. In terms of assembly, homodimer. Interacts with TP53. Ubiquitous. Widely distributed throughout the adult brain and predominantly expressed within specific astrocyte populations. Expressed at high level in adipose tissues of obese animals.

The protein localises to the nucleus. The protein resides in the nucleolus. It localises to the cytoplasm. Calcium-binding protein. Binds one calcium ion per monomer. Can promote differentiation of adipocytes (in vitro). Overexpression in 3T3-L1 preadipocytes increases their proliferation, enhances adipogenesis and reduces insulin-stimulated glucose uptake. This is Protein S100-A16 from Mus musculus (Mouse).